The primary structure comprises 601 residues: Coronin-like protein crn1 (601 aa).

5 WD repeats span residues 79 to 119 (GHTA…TVME), 132 to 172 (GHSR…AHVS), 174 to 213 (KMDV…PVSV), 220 to 260 (AKNP…EPIG), and 266 to 306 (DTGS…FHYL). Disordered stretches follow at residues 361–386 (SDIY…KDAQ) and 407–540 (SATV…VEEK). 3 stretches are compositionally biased toward basic and acidic residues: residues 419-429 (KHNEEKVETPK), 437-453 (KPKE…EPEV), and 462-495 (KVEE…EKSF). Phosphoserine is present on residues Ser-500 and Ser-501. The span at 507-526 (EDVKKEPSEEKKLEVSDEAP) shows a compositional bias: basic and acidic residues. At Ser-553 the chain carries Phosphoserine. Positions 556-600 (NLADLNKRFEGFEKRYEEELAIRDWKIAQLEDKLAKLTEAIKEKC) form a coiled coil.

Belongs to the WD repeat coronin family. As to quaternary structure, binds to F-actin.

This chain is Coronin-like protein crn1 (crn1), found in Schizosaccharomyces pombe (strain 972 / ATCC 24843) (Fission yeast).